The chain runs to 156 residues: MLHIKTIEGQLDAKGLKFAIVATRFNDFIVDRLIGGACDYLQRHGCDRENLTIVRIPGAFEMPLVAKKLAHSGKYDGIIALGAVIRGATPHFDFVSNEASKGLAQACLESGVPLGFGLLTTDNIEQAIERAGSKAGNKGAEAAAAVLETVRVMEQL.

Residues Phe25, Ala59–Glu61, and Ala83–Ile85 each bind 5-amino-6-(D-ribitylamino)uracil. Ala88 to Thr89 contacts (2S)-2-hydroxy-3-oxobutyl phosphate. Catalysis depends on His91, which acts as the Proton donor. Residue Phe116 coordinates 5-amino-6-(D-ribitylamino)uracil. Residue Arg130 coordinates (2S)-2-hydroxy-3-oxobutyl phosphate.

This sequence belongs to the DMRL synthase family.

The catalysed reaction is (2S)-2-hydroxy-3-oxobutyl phosphate + 5-amino-6-(D-ribitylamino)uracil = 6,7-dimethyl-8-(1-D-ribityl)lumazine + phosphate + 2 H2O + H(+). It participates in cofactor biosynthesis; riboflavin biosynthesis; riboflavin from 2-hydroxy-3-oxobutyl phosphate and 5-amino-6-(D-ribitylamino)uracil: step 1/2. Its function is as follows. Catalyzes the formation of 6,7-dimethyl-8-ribityllumazine by condensation of 5-amino-6-(D-ribitylamino)uracil with 3,4-dihydroxy-2-butanone 4-phosphate. This is the penultimate step in the biosynthesis of riboflavin. This is 6,7-dimethyl-8-ribityllumazine synthase from Nitratidesulfovibrio vulgaris (strain ATCC 29579 / DSM 644 / CCUG 34227 / NCIMB 8303 / VKM B-1760 / Hildenborough) (Desulfovibrio vulgaris).